Here is a 49-residue protein sequence, read N- to C-terminus: Disintegrin eristostatin (49 aa).

One can recognise a Disintegrin domain in the interval 1–49 (QEEPCATGPCCRRCKFKRAGKVCRVARGDWNDDYCTGKSCDCPKNPWNG). Disulfide bonds link cysteine 5–cysteine 14, cysteine 10–cysteine 35, cysteine 11–cysteine 40, and cysteine 23–cysteine 42. The short motif at 27–29 (RGD) is the Cell attachment site element.

Belongs to the venom metalloproteinase (M12B) family. P-II subfamily. P-IIa sub-subfamily. As to quaternary structure, monomer. Expressed by the venom gland.

It is found in the secreted. Functionally, is a potent inhibitor of ADP-induced platelet aggregation. Acts by binding to alpha-IIb/beta-3 (ITGA2B/ITGB3) receptor on the platelet surface. Binds with the same high affinity to resting and activated platelets. Also binds the alpha-4/beta-1 (ITGA4/ITGB1) integrin. Is a potent inhibitor of human and murine melanoma metastases in mouse model systems, also due to the inhibition of binding between the alpha-4/beta-1 integrin and the vascular cell adhesion protein VCAM1. Reacts neither with the integrin alpha-V/beta-3 (ITGAV/ITGB3) vitronectin receptor nor with the integrin alpha-5/beta-1 (ITGA5/ITGB1) fibronectin receptor. Has no effect on cell proliferation or angiogenesis. Specifically inhibits cell migration on fibronectin, but not that on collagen IV or laminin. May involve fibronectin-binding integrins that mediate cell migration. The polypeptide is Disintegrin eristostatin (Eristicophis macmahoni (Leaf-nosed viper)).